We begin with the raw amino-acid sequence, 180 residues long: Peptidyl-tRNA hydrolase (180 aa).

Tyr13 contributes to the tRNA binding site. His18 acts as the Proton acceptor in catalysis. 3 residues coordinate tRNA: Tyr58, Asn60, and Asn100.

The protein belongs to the PTH family. Monomer.

It is found in the cytoplasm. The enzyme catalyses an N-acyl-L-alpha-aminoacyl-tRNA + H2O = an N-acyl-L-amino acid + a tRNA + H(+). Hydrolyzes ribosome-free peptidyl-tRNAs (with 1 or more amino acids incorporated), which drop off the ribosome during protein synthesis, or as a result of ribosome stalling. Functionally, catalyzes the release of premature peptidyl moieties from peptidyl-tRNA molecules trapped in stalled 50S ribosomal subunits, and thus maintains levels of free tRNAs and 50S ribosomes. In Fervidobacterium nodosum (strain ATCC 35602 / DSM 5306 / Rt17-B1), this protein is Peptidyl-tRNA hydrolase.